The sequence spans 788 residues: Protein FAR1-RELATED SEQUENCE 5 (788 aa).

Residues 87–179 (AFYNSYARRI…VKDHNHELVP (93 aa)) enclose the FAR1 domain. Residues 299 to 395 (TVTFDTTYRS…CKWHILKKCQ (97 aa)) enclose the MULE domain. Residues 584–616 (FNVLEMRANCSCQMFEFSGIICRHILAVFRVTN) form an SWIM-type zinc finger. The disordered stretch occupies residues 713–733 (SSVTGGKHQQEVLAQPEPEDE). Positions 731–768 (EDEMDKKINQLRNELELANRKCEAYRTNLLSVLKEMED) form a coiled coil.

Belongs to the FHY3/FAR1 family. As to expression, expressed in hypocotyls, rosette and cauline leaves, inflorescences stems, flowers and siliques.

Its subcellular location is the nucleus. In terms of biological role, putative transcription activator involved in regulating light control of development. In Arabidopsis thaliana (Mouse-ear cress), this protein is Protein FAR1-RELATED SEQUENCE 5 (FRS5).